The following is a 167-amino-acid chain: Phospholipase A2 (167 aa).

Positions 1–18 are cleaved as a signal peptide; sequence MQVVLGSLFLLLLSTSHG. Positions 19-33 are excised as a propeptide; sequence WQIRDRIGDNELEER. Ca(2+) is bound by residues tryptophan 41, glycine 43, and glycine 45. 5 disulfide bridges follow: cysteine 42–cysteine 64, cysteine 63–cysteine 103, cysteine 70–cysteine 96, cysteine 94–cysteine 128, and cysteine 138–cysteine 146. N-linked (GlcNAc...) asparagine glycosylation occurs at asparagine 46. Histidine 67 is an active-site residue. Aspartate 68 lines the Ca(2+) pocket. The active site involves aspartate 97.

The protein belongs to the phospholipase A2 family. Group III subfamily. It depends on Ca(2+) as a cofactor. N-glycosylated; contains mannose, N-acetylglucosamine and fucose alphal-6 and/or alphal-3 linked to the innermost N-acetylglucosamine. As to expression, expressed by the venom gland.

The protein resides in the secreted. The enzyme catalyses a 1,2-diacyl-sn-glycero-3-phosphocholine + H2O = a 1-acyl-sn-glycero-3-phosphocholine + a fatty acid + H(+). Functionally, in vivo, intraplantar injection in mice cause spontaneous pain behaviors and paw swelling. PLA2 catalyzes the calcium-dependent hydrolysis of the 2-acyl groups in 3-sn-phosphoglycerides. The chain is Phospholipase A2 from Apis mellifera (Honeybee).